We begin with the raw amino-acid sequence, 443 residues long: Ribosomal protein uS12 methylthiotransferase RimO (443 aa).

One can recognise an MTTase N-terminal domain in the interval 5-115 (PNIGFISLGC…VMQHVHKYVP (111 aa)). Residues cysteine 14, cysteine 50, cysteine 79, cysteine 147, cysteine 151, and cysteine 154 each contribute to the [4Fe-4S] cluster site. In terms of domain architecture, Radical SAM core spans 133 to 374 (LTPKHYAYLK…MQVQQRISVA (242 aa)). A TRAM domain is found at 377–443 (QQKIGKTLAI…ADEYDLWGTY (67 aa)).

The protein belongs to the methylthiotransferase family. RimO subfamily. [4Fe-4S] cluster serves as cofactor.

It is found in the cytoplasm. It carries out the reaction L-aspartate(89)-[ribosomal protein uS12]-hydrogen + (sulfur carrier)-SH + AH2 + 2 S-adenosyl-L-methionine = 3-methylsulfanyl-L-aspartate(89)-[ribosomal protein uS12]-hydrogen + (sulfur carrier)-H + 5'-deoxyadenosine + L-methionine + A + S-adenosyl-L-homocysteine + 2 H(+). Its function is as follows. Catalyzes the methylthiolation of an aspartic acid residue of ribosomal protein uS12. The sequence is that of Ribosomal protein uS12 methylthiotransferase RimO from Haemophilus ducreyi (strain 35000HP / ATCC 700724).